The sequence spans 20 residues: Agglutinin beta-2 chain isoform 1 (20 aa).

Residues 1–10 (TQSTGTSQTI) show a composition bias toward polar residues. Positions 1–20 (TQSTGTSQTIAVGLWGGPDN) are disordered.

The protein belongs to the jacalin lectin family. In terms of assembly, tetramer of four alpha chains associated with two or four beta chains.

Functionally, alpha-methyl-D-mannoside and D-mannose specific lectin. Binds IgA. The polypeptide is Agglutinin beta-2 chain isoform 1 (Morus nigra (Black mulberry)).